Consider the following 238-residue polypeptide: Adapter protein MecA (238 aa).

Residues 108–133 (EDENEESVQGNQQQRRSHASDHSKRA) are disordered.

It belongs to the MecA family. In terms of assembly, homodimer.

Enables the recognition and targeting of unfolded and aggregated proteins to the ClpC protease or to other proteins involved in proteolysis. The protein is Adapter protein MecA of Staphylococcus carnosus (strain TM300).